We begin with the raw amino-acid sequence, 642 residues long: Acid beta-fructofuranosidase (642 aa).

Topologically, residues 1–22 are cytoplasmic; it reads MRNDSPYTPLLNASHNNHRRRE. Residues 1 to 95 constitute a propeptide, removed in mature form; sequence MRNDSPYTPL…LSGNLVGEGG (95 aa). The helical; Signal-anchor for type II membrane protein transmembrane segment at 23–43 threads the bilayer; it reads LLLLFSGLLLLASIIAFSAYI. Residues 44–642 are Lumenal-facing; that stretch reads AQPHADADVS…YHPDQKRQTS (599 aa). N100 is a glycosylation site (N-linked (GlcNAc...) asparagine). Substrate is bound by residues 119–122, Q138, W146, 181–182, and 245–246; these read WMND, WT, and RD. D122 is an active-site residue. A glycan (N-linked (GlcNAc...) asparagine) is linked at N267. Positions 300 and 333 each coordinate substrate. C490 and C538 form a disulfide bridge. N491 and N615 each carry an N-linked (GlcNAc...) asparagine glycan.

The protein belongs to the glycosyl hydrolase 32 family. In terms of assembly, may be present in two forms, a 70 kDa monomer and a heterodimer of the 30 kDa and 38 kDa subunits. The ratio of the levels of the two forms within cells appears to be regulated developmentally.

Its subcellular location is the membrane. It is found in the vacuole. It localises to the vacuole lumen. It carries out the reaction Hydrolysis of terminal non-reducing beta-D-fructofuranoside residues in beta-D-fructofuranosides.. It functions in the pathway glycan biosynthesis; sucrose metabolism. In Vicia faba (Broad bean), this protein is Acid beta-fructofuranosidase (VCINV).